A 231-amino-acid chain; its full sequence is tRNA (guanine-N(1)-)-methyltransferase (231 aa).

S-adenosyl-L-methionine-binding positions include glycine 109 and 133-138; that span reads IGDYVL.

Belongs to the RNA methyltransferase TrmD family. In terms of assembly, homodimer.

Its subcellular location is the cytoplasm. The enzyme catalyses guanosine(37) in tRNA + S-adenosyl-L-methionine = N(1)-methylguanosine(37) in tRNA + S-adenosyl-L-homocysteine + H(+). Its function is as follows. Specifically methylates guanosine-37 in various tRNAs. This is tRNA (guanine-N(1)-)-methyltransferase from Nocardia farcinica (strain IFM 10152).